An 82-amino-acid chain; its full sequence is RNA-binding protein YbxF (82 aa).

This sequence belongs to the eukaryotic ribosomal protein eL8 family.

This chain is RNA-binding protein YbxF, found in Geobacillus stearothermophilus (Bacillus stearothermophilus).